The chain runs to 336 residues: Glyceraldehyde-3-phosphate dehydrogenase (336 aa).

NAD(+) contacts are provided by residues 12-13, Asp-34, Arg-78, and Thr-121; that span reads RI. D-glyceraldehyde 3-phosphate-binding positions include 151–153, Thr-182, Arg-199, 212–213, and Arg-235; these read SCT and TG. The Nucleophile role is filled by Cys-152. Residue Asn-316 coordinates NAD(+).

It belongs to the glyceraldehyde-3-phosphate dehydrogenase family. Homotetramer.

It is found in the cytoplasm. It carries out the reaction D-glyceraldehyde 3-phosphate + phosphate + NAD(+) = (2R)-3-phospho-glyceroyl phosphate + NADH + H(+). It functions in the pathway carbohydrate degradation; glycolysis; pyruvate from D-glyceraldehyde 3-phosphate: step 1/5. Functionally, also binds human plasminogen. In terms of biological role, catalyzes the oxidative phosphorylation of glyceraldehyde 3-phosphate (G3P) to 1,3-bisphosphoglycerate (BPG) using the cofactor NAD. The first reaction step involves the formation of a hemiacetal intermediate between G3P and a cysteine residue, and this hemiacetal intermediate is then oxidized to a thioester, with concomitant reduction of NAD to NADH. The reduced NADH is then exchanged with the second NAD, and the thioester is attacked by a nucleophilic inorganic phosphate to produce BPG. This is Glyceraldehyde-3-phosphate dehydrogenase (gap) from Streptococcus pyogenes.